Here is a 252-residue protein sequence, read N- to C-terminus: Transcriptional regulatory protein HptR (252 aa).

In terms of domain architecture, Response regulatory spans 3–118 (KVVICDDERI…QLEVILGRLV (116 aa)). Aspartate 55 carries the post-translational modification 4-aspartylphosphate. The HTH araC/xylS-type domain maps to 153 to 250 (NQIVDQIKQS…QMSPSDYCKQ (98 aa)). 2 consecutive DNA-binding regions (H-T-H motif) follow at residues 170 to 191 (SDLI…KDHV) and 217 to 240 (HYEI…KKYL).

Phosphorylated by HptS.

It localises to the cytoplasm. Member of the two-component regulatory system HptS/HptR that regulates genes involved in hexose phosphate transport system in response to changes in extracellular phosphate sources. Activates uhpT expression to facilitate glucose-6-phosphate/G6P utilization by directly binding to its promoter. Antagonizes CcpA-dependent transcription of a subset of CcpA-regulated genes involved in antibiotic susceptibility. This chain is Transcriptional regulatory protein HptR (hptR), found in Staphylococcus aureus (strain NCTC 8325 / PS 47).